The chain runs to 673 residues: Ion-translocating oxidoreductase complex subunit C (673 aa).

4Fe-4S ferredoxin-type domains follow at residues 368-397 (MGAP…QQLY) and 407-436 (KATA…VQYF). 8 residues coordinate [4Fe-4S] cluster: C377, C380, C383, C387, C416, C419, C422, and C426. The segment at 529-554 (EARKAQARAKQAGHPMADSATSGDDP) is disordered.

This sequence belongs to the 4Fe4S bacterial-type ferredoxin family. RnfC subfamily. The complex is composed of six subunits: RsxA, RsxB, RsxC, RsxD, RsxE and RsxG. Requires [4Fe-4S] cluster as cofactor.

The protein resides in the cell inner membrane. In terms of biological role, part of a membrane-bound complex that couples electron transfer with translocation of ions across the membrane. Required to maintain the reduced state of SoxR. The protein is Ion-translocating oxidoreductase complex subunit C of Salmonella arizonae (strain ATCC BAA-731 / CDC346-86 / RSK2980).